The primary structure comprises 435 residues: 3-ketoacyl-CoA thiolase (435 aa).

Cys98 acts as the Acyl-thioester intermediate in catalysis. Active-site proton acceptor residues include His391 and Cys421.

This sequence belongs to the thiolase-like superfamily. Thiolase family. As to quaternary structure, heterotetramer of two alpha chains (FadJ) and two beta chains (FadI).

It is found in the cytoplasm. It carries out the reaction an acyl-CoA + acetyl-CoA = a 3-oxoacyl-CoA + CoA. Its pathway is lipid metabolism; fatty acid beta-oxidation. In terms of biological role, catalyzes the final step of fatty acid oxidation in which acetyl-CoA is released and the CoA ester of a fatty acid two carbons shorter is formed. The sequence is that of 3-ketoacyl-CoA thiolase from Colwellia psychrerythraea (strain 34H / ATCC BAA-681) (Vibrio psychroerythus).